Here is a 170-residue protein sequence, read N- to C-terminus: Siroheme decarboxylase NirL subunit (170 aa).

Belongs to the Ahb/Nir family. As to quaternary structure, probably forms a complex composed of NirD, NirL, NirG and NirH. All proteins are required for the total conversion of siroheme to didecarboxysiroheme.

The catalysed reaction is siroheme + 2 H(+) = 12,18-didecarboxysiroheme + 2 CO2. It functions in the pathway porphyrin-containing compound metabolism. In terms of biological role, involved in heme d1 biosynthesis. Catalyzes the decarboxylation of siroheme into didecarboxysiroheme. The protein is Siroheme decarboxylase NirL subunit of Stutzerimonas stutzeri (Pseudomonas stutzeri).